Here is a 3088-residue protein sequence, read N- to C-terminus: Protein prune homolog 2 (3088 aa).

At Met-1 the chain carries N-acetylmethionine. Residues 109 to 111 (GSS) carry the DHH motif motif. Disordered regions lie at residues 433 to 468 (IRSS…GLDS), 490 to 628 (HFDL…EPAS), 673 to 759 (SSEQ…QGTN), 771 to 795 (SGRS…AAVA), 846 to 909 (SELL…PKTR), 952 to 1080 (SNLG…SSYD), 1192 to 1211 (SDEH…NEKS), 1231 to 1371 (SFML…LVAS), 1413 to 1452 (RDVQ…GMNF), 1472 to 1491 (LEPE…SLDF), 1515 to 1585 (VKGS…QESE), 1632 to 1698 (DSFS…EESI), 1741 to 1768 (LDSS…DPWT), 1782 to 1813 (VEKE…KNED), 2089 to 2114 (ILTH…SEAK), 2173 to 2215 (YQAD…PDMA), 2240 to 2260 (QEPT…PESQ), 2492 to 2542 (SDLP…KNED), 2589 to 2667 (TQLA…SELG), 2687 to 2710 (ALEE…AGPD), 2814 to 2833 (QSEG…EIDI), and 2841 to 2875 (PDEA…AEEE). The segment covering 503–512 (SGQSQQSSHS) has biased composition (low complexity). The span at 562–582 (SLVEHDEEFVQRQDSPRDNSE) shows a compositional bias: basic and acidic residues. Composition is skewed to polar residues over residues 613–625 (MNSL…STEE) and 673–684 (SSEQESVFQSPE). The segment covering 685-699 (SWKEHKPSSIDRRAS) has biased composition (basic and acidic residues). The span at 750-759 (LPNTSPQGTN) shows a compositional bias: polar residues. Polar residues predominate over residues 846 to 857 (SELLDNSPSEIN). Residues 865-876 (WGKKNNDSRDHI) are compositionally biased toward basic and acidic residues. The segment covering 881-894 (NPSSDLDHTWTNSK) has biased composition (polar residues). Residues 895–909 (PPKEDQNGLVDPKTR) are compositionally biased toward basic and acidic residues. The segment covering 964–977 (DTNYSTSDSYTSPT) has biased composition (low complexity). A compositionally biased stretch (basic and acidic residues) spans 980 to 1000 (GDEKETEHKPFAKEEGFESKD). Composition is skewed to polar residues over residues 1001-1027 (GNST…SSGP) and 1037-1048 (HTDNSSEINTTH). Composition is skewed to basic and acidic residues over residues 1049–1062 (NLDE…HTDG), 1192–1208 (SDEH…HTLN), 1282–1293 (HLDKQDTERETL), 1314–1339 (DPWK…RGHL), and 1425–1434 (QPKDTHEKHL). The span at 1436-1450 (SQRNSGETTETSDGM) shows a compositional bias: polar residues. A compositionally biased stretch (polar residues) spans 1537–1585 (SSEYTHSSASSPELNDSSVALSSWGQQPSSGYQEENQGNWSEQNHQESE). The segment covering 1687-1698 (SDDDSVGGEESI) has biased composition (acidic residues). The segment covering 1752–1768 (KSNPFCDNQQSSPDPWT) has biased composition (polar residues). Composition is skewed to basic and acidic residues over residues 2516-2542 (EKTI…KNED) and 2604-2622 (NERK…DTRS). The segment covering 2623 to 2632 (SFESPAQDQS) has biased composition (polar residues). Acidic residues predominate over residues 2823–2833 (DNLDSPDEIDI). The CRAL-TRIO domain maps to 2895-3056 (DMKVIEPYRR…SIIKLDEELR (162 aa)).

The protein belongs to the PPase class C family. Prune subfamily. A high level of expression seen in the nervous system (brain, cerebellum and spinal cord) as well as adrenal gland. Expressed at high levels in noneuroblastoma, rhabdomyosarcoma, melanoma and some osteosarcoma cell lines, whereas at only low levels in cancer cell lines of liver, breast, thyroid and colon. Expression is significantly higher in favorable tumors than aggressive ones.

The protein localises to the cytoplasm. In terms of biological role, may play an important role in regulating differentiation, survival and aggressiveness of the tumor cells. This is Protein prune homolog 2 (PRUNE2) from Homo sapiens (Human).